The primary structure comprises 308 residues: B3 domain-containing protein REM23 (308 aa).

Residues 19–114 constitute a DNA-binding region (TF-B3 1); it reads FFKVLKRSDM…SFTVKIFNKD (96 aa). The disordered stretch occupies residues 117 to 198; the sequence is EMMQPPQSRA…TERTQNSKRT (82 aa). The segment covering 121–133 has biased composition (polar residues); that stretch reads PPQSRASFASSSR. Over residues 134–145 the composition is skewed to basic and acidic residues; it reads VKTEQDVKREEE. Positions 149-166 are enriched in polar residues; sequence SSDSRSRGPTTAAETNRG. Residues 168–177 show a composition bias toward basic residues; the sequence is SYKRKLNFGK. Basic and acidic residues predominate over residues 178-198; the sequence is KKAEETQTYKRTERTQNSKRT. The TF-B3 2 DNA-binding region spans 216–308; that stretch reads VAGFKIFISK…LELLLVVSKP (93 aa).

The protein resides in the nucleus. The protein is B3 domain-containing protein REM23 (REM23) of Arabidopsis thaliana (Mouse-ear cress).